The following is a 292-amino-acid chain: Secreted frizzled-related protein 2 (292 aa).

An N-terminal signal peptide occupies residues 1–20; the sequence is MPRRLCALLLLASQCLGSTA. The FZ domain maps to 32–152; sequence YKRSNCKPIP…PKDNDLCIPL (121 aa). 7 cysteine pairs are disulfide-bonded: cysteine 37/cysteine 100, cysteine 47/cysteine 93, cysteine 84/cysteine 122, cysteine 111/cysteine 149, cysteine 115/cysteine 139, cysteine 169/cysteine 242, and cysteine 187/cysteine 292. One can recognise an NTR domain in the interval 169–292; that stretch reads CDACKNKNED…FSRSIRKLQC (124 aa).

The protein belongs to the secreted frizzled-related protein (sFRP) family.

Its subcellular location is the secreted. Soluble frizzled-related proteins (sFRPS) function as modulators of Wnt signaling through direct interaction with Wnts. They have a role in regulating cell growth and differentiation in specific cell types. SFRP2 appears to be associated with myogenesis. The chain is Secreted frizzled-related protein 2 (SFRP2) from Gallus gallus (Chicken).